We begin with the raw amino-acid sequence, 160 residues long: Troponin C, skeletal muscle (160 aa).

An N-acetylthreonine modification is found at Thr2. EF-hand domains follow at residues Glu15–Thr50, Pro51–Glu86, Lys91–His126, and Val127–Gln160. Residues Asp28, Asp30, Asp34, Glu39, Asp64, Asp66, Ser68, Thr70, Glu75, Asp104, Asn106, Asp108, Tyr110, Glu115, Asp140, Asn142, Asp144, Arg146, and Glu151 each coordinate Ca(2+).

Belongs to the troponin C family.

Troponin is the central regulatory protein of striated muscle contraction. Tn consists of three components: Tn-I which is the inhibitor of actomyosin ATPase, Tn-T which contains the binding site for tropomyosin and Tn-C. The binding of calcium to Tn-C abolishes the inhibitory action of Tn on actin filaments. The polypeptide is Troponin C, skeletal muscle (TNNC2) (Oryctolagus cuniculus (Rabbit)).